Here is a 217-residue protein sequence, read N- to C-terminus: Nuclear transcription factor Y subunit C-3 (217 aa).

Positions 1-28 (MDQQGQSSAMNYGSNPYQTNAMTTTPTG) are enriched in polar residues. 2 disordered regions span residues 1–29 (MDQQGQSSAMNYGSNPYQTNAMTTTPTGS) and 198–217 (PYMGQPMWQQPGPEQQDPDN).

It belongs to the NFYC/HAP5 subunit family. Heterotrimeric transcription factor composed of three components, NF-YA, NF-YB and NF-YC. NF-YB and NF-YC must interact and dimerize for NF-YA association and DNA binding. As to expression, ubiquitous.

It is found in the nucleus. Functionally, stimulates the transcription of various genes by recognizing and binding to a CCAAT motif in promoters. The polypeptide is Nuclear transcription factor Y subunit C-3 (NFYC3) (Arabidopsis thaliana (Mouse-ear cress)).